The primary structure comprises 321 residues: Serine/threonine-protein phosphatase PP1 isozyme 4 (321 aa).

At Ala2 the chain carries N-acetylalanine. 4 residues coordinate Mn(2+): Asp74, His76, Asp102, and Asn134. His135 acts as the Proton donor in catalysis. Residues His183 and His258 each contribute to the Mn(2+) site.

This sequence belongs to the PPP phosphatase family. PP-1 subfamily. Interacts with the DELLA proteins RGA and GAI. Interacts with PIF3 and PIF5. Interacts with the auxin efflux carrier PIN1. Mn(2+) is required as a cofactor. In terms of tissue distribution, expressed in the vasculature of roots and cotyledons, tips of leaves, guard cells, bases of trichomes, pistils and stamen filaments.

It localises to the nucleus. The protein resides in the cytoplasm. The enzyme catalyses O-phospho-L-seryl-[protein] + H2O = L-seryl-[protein] + phosphate. It carries out the reaction O-phospho-L-threonyl-[protein] + H2O = L-threonyl-[protein] + phosphate. Its activity is regulated as follows. Phosphatase activity is strongly reduced by the protein phosphatase inhibitor 2 (I-2). Its function is as follows. Serine/threonine-protein phosphatase that possesses phosphatase activity toward para-nitrophenyl phosphate (pNPP) in vitro. Acts as a positive regulator in the gibberellin (GA) signaling pathway to regulate plant growth and development. Promotes the GA-induced and proteasomal-dependent degradation of the DELLA proteins RGA and GAI by directly binding and dephosphorylating these proteins. Involved in the regulation of phytochrome B (phyB) signaling pathway that controls photomorphogenesis. Promotes the proteasomal-dependent degradation of PIF5 factor by directly binding and dephosphorylating this protein. Involved in the regulation of pavement cell (PC) interdigitation by modulating the auxin efflux carrier PIN1 polarity and endocytic trafficking. Regulates PIN1 polar targeting through direct binding and dephosphorylation. Acts antagonistically with PID in regulating PC development. This Arabidopsis thaliana (Mouse-ear cress) protein is Serine/threonine-protein phosphatase PP1 isozyme 4.